The chain runs to 306 residues: Curved DNA-binding protein (306 aa).

The J domain occupies 5–69; that stretch reads DYYAIMGVKP…QRRAEYDQMW (65 aa).

Its subcellular location is the cytoplasm. It localises to the nucleoid. In terms of biological role, DNA-binding protein that preferentially recognizes a curved DNA sequence. It is probably a functional analog of DnaJ; displays overlapping activities with DnaJ, but functions under different conditions, probably acting as a molecular chaperone in an adaptive response to environmental stresses other than heat shock. Lacks autonomous chaperone activity; binds native substrates and targets them for recognition by DnaK. Its activity is inhibited by the binding of CbpM. This is Curved DNA-binding protein from Escherichia coli O127:H6 (strain E2348/69 / EPEC).